The primary structure comprises 254 residues: MSFTVLIPARLASTRLPDKPLADIAGKPMVVRVAERAALSGAERVMIATDDARVQQAAADHGHAAILTRPDHPTGTDRLSEAVDALGLPDDAIVVNVQGDEPLIEPALIDAVAAQLVAAPHADIATCACPLADAEALFDPNVVKVVCAADRRALYFSRAPIPWARDALAGGARVLAPGLPAWHHIGIYAYRVAFLRRFPALSQGQLERYESLEQLRAMEHGHVIVVHHTDSAPAAGVDTPADLERARAAYTNRL.

It belongs to the KdsB family.

It localises to the cytoplasm. The enzyme catalyses 3-deoxy-alpha-D-manno-oct-2-ulosonate + CTP = CMP-3-deoxy-beta-D-manno-octulosonate + diphosphate. The protein operates within nucleotide-sugar biosynthesis; CMP-3-deoxy-D-manno-octulosonate biosynthesis; CMP-3-deoxy-D-manno-octulosonate from 3-deoxy-D-manno-octulosonate and CTP: step 1/1. Its pathway is bacterial outer membrane biogenesis; lipopolysaccharide biosynthesis. In terms of biological role, activates KDO (a required 8-carbon sugar) for incorporation into bacterial lipopolysaccharide in Gram-negative bacteria. The polypeptide is 3-deoxy-manno-octulosonate cytidylyltransferase (Bordetella bronchiseptica (strain ATCC BAA-588 / NCTC 13252 / RB50) (Alcaligenes bronchisepticus)).